The primary structure comprises 132 residues: Agouti-signaling protein (132 aa).

Positions 1-22 (MDVTRLLLATLLVFLCFFTAYS) are cleaved as a signal peptide. N-linked (GlcNAc...) asparagine glycosylation occurs at Asn-39. A disordered region spans residues 62–88 (ISRKEAEKKRSSKKEASMKKVARPRTP). The span at 63 to 79 (SRKEAEKKRSSKKEASM) shows a compositional bias: basic and acidic residues. Disulfide bonds link Cys-93–Cys-108, Cys-100–Cys-114, Cys-107–Cys-125, Cys-111–Cys-132, and Cys-116–Cys-123. Residues 93-132 (CVATRDSCKPPAPACCDPCASCQCRFFRSACSCRVLSLNC) enclose the Agouti domain.

The protein resides in the secreted. Functionally, involved in the regulation of melanogenesis. The binding of ASP to MC1R precludes alpha-MSH initiated signaling and thus blocks production of cAMP, leading to a down-regulation of eumelanogenesis (brown/black pigment) and thus increasing synthesis of pheomelanin (yellow/red pigment). The sequence is that of Agouti-signaling protein (ASIP) from Chlorocebus aethiops (Green monkey).